Here is a 476-residue protein sequence, read N- to C-terminus: Sulfate adenylyltransferase subunit 1 (476 aa).

In terms of domain architecture, tr-type G spans 24–238 (KSLLRFLTCG…ELLEYVDIDR (215 aa)). The G1 stretch occupies residues 33–40 (GSVDDGKS). 33–40 (GSVDDGKS) serves as a coordination point for GTP. Positions 91–95 (GITID) are G2. The G3 stretch occupies residues 112 to 115 (DTPG). GTP is bound by residues 112–116 (DTPGH) and 167–170 (NKMD). Residues 167-170 (NKMD) are G4. Positions 205 to 207 (SAL) are G5.

Belongs to the TRAFAC class translation factor GTPase superfamily. Classic translation factor GTPase family. CysN/NodQ subfamily. As to quaternary structure, heterodimer composed of CysD, the smaller subunit, and CysN.

It carries out the reaction sulfate + ATP + H(+) = adenosine 5'-phosphosulfate + diphosphate. It functions in the pathway sulfur metabolism; hydrogen sulfide biosynthesis; sulfite from sulfate: step 1/3. With CysD forms the ATP sulfurylase (ATPS) that catalyzes the adenylation of sulfate producing adenosine 5'-phosphosulfate (APS) and diphosphate, the first enzymatic step in sulfur assimilation pathway. APS synthesis involves the formation of a high-energy phosphoric-sulfuric acid anhydride bond driven by GTP hydrolysis by CysN coupled to ATP hydrolysis by CysD. The chain is Sulfate adenylyltransferase subunit 1 from Vibrio cholerae serotype O1 (strain M66-2).